Reading from the N-terminus, the 685-residue chain is Diphthine--ammonia ligase (685 aa).

In the C-terminal section; belongs to the RutC family. This sequence in the N-terminal section; belongs to the Diphthine--ammonia ligase family. Interacts with elongation factor 2 (eEF-2; EFT1 or EFT2).

It localises to the cytoplasm. The catalysed reaction is diphthine-[translation elongation factor 2] + NH4(+) + ATP = diphthamide-[translation elongation factor 2] + AMP + diphosphate + H(+). It functions in the pathway protein modification; peptidyl-diphthamide biosynthesis. Amidase that catalyzes the last step of diphthamide biosynthesis using ammonium and ATP. Diphthamide biosynthesis consists in the conversion of an L-histidine residue in the translation elongation factor eEF-2 (EFT1 or EFT2) to diphthamide. The polypeptide is Diphthine--ammonia ligase (DPH6) (Saccharomyces cerevisiae (strain ATCC 204508 / S288c) (Baker's yeast)).